Here is an 81-residue protein sequence, read N- to C-terminus: Large ribosomal subunit protein bL31B (81 aa).

This sequence belongs to the bacterial ribosomal protein bL31 family. Type B subfamily. In terms of assembly, part of the 50S ribosomal subunit.

The protein is Large ribosomal subunit protein bL31B of Cutibacterium acnes (strain DSM 16379 / KPA171202) (Propionibacterium acnes).